A 575-amino-acid chain; its full sequence is SH2B adapter protein 3 (575 aa).

Disordered regions lie at residues 1 to 23, 83 to 136, and 150 to 176; these read MNGP…AAAP, RAPG…CSFQ, and SAGE…PARP. Ser-13 is modified (phosphoserine). Residues 83–93 show a composition bias toward basic and acidic residues; sequence RAPGRDYRDTG. Residues 95–104 are compositionally biased toward low complexity; the sequence is GPPAKAEASP. Residues Ser-103, Ser-120, and Ser-150 each carry the phosphoserine modification. Residues 152–174 are compositionally biased toward low complexity; that stretch reads GELPAAHTAAAPGTPGEAAETPA. Residues 194–307 form the PH domain; that stretch reads EALKEAVLRY…WMAELSECTG (114 aa). The disordered stretch occupies residues 322-346; it reads ALEPSTSSSPRGSTDSLNQGASPGG. Residues 325–337 show a composition bias toward low complexity; it reads PSTSSSPRGSTDS. Ser-330 carries the phosphoserine modification. The SH2 domain occupies 364-462; it reads WFHGPISRVK…ACDVRLSSYV (99 aa). Disordered regions lie at residues 503 to 525 and 546 to 575; these read SSGC…PEQI and PVNR…YTPL.

It belongs to the SH2B adapter family. Binds to the tyrosine-phosphorylated TCR zeta chain via its SH2 domain. In terms of processing, tyrosine phosphorylated by LCK. As to expression, preferentially expressed by lymphoid cell lines.

Links T-cell receptor activation signal to phospholipase C-gamma-1, GRB2 and phosphatidylinositol 3-kinase. The chain is SH2B adapter protein 3 (SH2B3) from Homo sapiens (Human).